The sequence spans 473 residues: Fumarate hydratase class II 2 (473 aa).

Residues 1–28 (MAKSARTKTARPATRTETDSFGPIEVPS) form a disordered region. Substrate-binding positions include 108-110 (SGT), 139-142 (HPND), 149-151 (SSN), and T197. The active-site Proton donor/acceptor is the H198. Residue S328 is part of the active site. Residues S329 and 334-336 (KVN) each bind substrate.

It belongs to the class-II fumarase/aspartase family. Fumarase subfamily. As to quaternary structure, homotetramer.

It is found in the cytoplasm. The enzyme catalyses (S)-malate = fumarate + H2O. The protein operates within carbohydrate metabolism; tricarboxylic acid cycle; (S)-malate from fumarate: step 1/1. Involved in the TCA cycle. Catalyzes the stereospecific interconversion of fumarate to L-malate. This Bradyrhizobium diazoefficiens (strain JCM 10833 / BCRC 13528 / IAM 13628 / NBRC 14792 / USDA 110) protein is Fumarate hydratase class II 2.